We begin with the raw amino-acid sequence, 402 residues long: Protein lag-2 (402 aa).

The N-terminal stretch at 1–15 (MIAYFLLLLTCLPVL) is a signal peptide. The Extracellular portion of the chain corresponds to 16–279 (QARVEVHQEF…TTTTPTTVEI (264 aa)). N-linked (GlcNAc...) asparagine glycosylation is found at N72 and N105. One can recognise a DSL domain in the interval 122-166 (VTCARNYFGNRCENFCDAHLAKAARKRCDAMGRLRCDIGWMGPHC). Intrachain disulfides connect C124-C133, C137-C149, C157-C166, C175-C183, C177-C204, C206-C215, C233-C245, C239-C254, and C256-C265. EGF-like domains are found at residues 171–216 (DPRK…TRCE) and 229–266 (RPDA…EFCE). N194 carries N-linked (GlcNAc...) asparagine glycosylation. The chain crosses the membrane as a helical span at residues 280–306 (TVSTSGYSSAVYITVALFVIFSIIIGC). The Cytoplasmic portion of the chain corresponds to 307–402 (FKYKFKPMRQ…PPSIPACHYV (96 aa)).

As to quaternary structure, may interact with lin-12 / Notch receptor. As to expression, expressed in the gonad distal tip cell (DTC) of hermaphrodites.

The protein localises to the cell membrane. In terms of biological role, probable ligand for lin-12/Notch and glp-1/Notch receptors and involved in the mediation of Notch signaling. Involved in the lin-12/Notch pathway signaling of cell fate in vulval precursor cells (VPCs) and in the postembryonic mesodermal lineage (M lineage), acting redundantly with dsl-1 and apx-1. Functions in uterine cells to promote basement membrane mobility during tissue remodeling. Required for oocyte growth control, acting redundantly with apx-1, perhaps signaling via the glp-1/Notch pathway. Plays a role in Notch-dependent induction of left-right asymmetry in interneurons and motoneurons. Involved in maintaining the developmentally arrested larval state known as dauer, probably signaling in the glp-1/Notch pathway. Required for normal sleep bout quantity and arousal thresholds during the transition from the last larval stage to adulthood in well-fed animals. The protein is Protein lag-2 of Caenorhabditis elegans.